The chain runs to 331 residues: L-lactate dehydrogenase A chain (331 aa).

NAD(+)-binding positions include 29 to 57 (GMVG…MEDK) and Arg98. Positions 105, 137, and 168 each coordinate substrate. Asn137 serves as a coordination point for NAD(+). The Proton acceptor role is filled by His192. Residue Thr247 participates in substrate binding.

Belongs to the LDH/MDH superfamily. LDH family. Homotetramer.

The protein localises to the cytoplasm. The enzyme catalyses (S)-lactate + NAD(+) = pyruvate + NADH + H(+). It functions in the pathway fermentation; pyruvate fermentation to lactate; (S)-lactate from pyruvate: step 1/1. Interconverts simultaneously and stereospecifically pyruvate and lactate with concomitant interconversion of NADH and NAD(+). This chain is L-lactate dehydrogenase A chain (ldha), found in Harpagifer antarcticus (Antarctic spiny plunderfish).